Reading from the N-terminus, the 879-residue chain is Prostaglandin F2 receptor negative regulator (879 aa).

An N-terminal signal peptide occupies residues 1 to 21 (MGRPAPRPLLLALLSLAVCRG). Ig-like C2-type domains lie at 22 to 129 (RVVR…ATVQ) and 149 to 268 (PSSR…KAVE). The Extracellular segment spans residues 22–832 (RVVRVPAGTL…MDVLNAFKYP (811 aa)). Cystine bridges form between cysteine 43–cysteine 119 and cysteine 169–cysteine 247. N-linked (GlcNAc...) asparagine glycosylation occurs at asparagine 44. The Cell attachment site signature appears at 89-91 (RGD). Position 271 is a phosphothreonine (threonine 271). Ig-like C2-type domains lie at 276–389 (PTAL…WHKV), 406–527 (PEYQ…RNSS), 544–662 (ASED…AWSP), and 688–813 (PIFN…AEIH). Residues cysteine 299 and cysteine 373 are joined by a disulfide bond. 3 N-linked (GlcNAc...) asparagine glycosylation sites follow: asparagine 300, asparagine 383, and asparagine 413. The short motif at 424 to 427 (PTEL) is the Endoplasmic reticulum retention signal element. A disulfide bridge connects residues cysteine 429 and cysteine 515. N-linked (GlcNAc...) asparagine glycosylation is found at asparagine 525, asparagine 600, asparagine 618, and asparagine 691. Cysteine 571 and cysteine 655 are disulfide-bonded. The Cell attachment site motif lies at 703 to 705 (RGD). Cysteine 711 and cysteine 793 are disulfide-bonded. A helical transmembrane segment spans residues 833-853 (LLIGVGLSTVIGLLSCLIGYC). Residues 854-879 (SSHWCCKKEVRETRRERRRLMSMEMD) lie on the Cytoplasmic side of the membrane.

Interacts with CD9 and CD81. Part of a complex composed of CD9, CD81 and IGSF8. Also seems to interact with CD63, CD82 and CD151. As to expression, reproductive tissues, lung and heart.

It is found in the endoplasmic reticulum membrane. The protein localises to the golgi apparatus. The protein resides in the trans-Golgi network membrane. Inhibits the binding of prostaglandin F2-alpha (PGF2-alpha) to its specific FP receptor, by decreasing the receptor number rather than the affinity constant. Functional coupling with the prostaglandin F2-alpha receptor seems to occur. In myoblasts, associates with tetraspanins CD9 and CD81 to prevent myotube fusion during muscle regeneration. This is Prostaglandin F2 receptor negative regulator (Ptgfrn) from Rattus norvegicus (Rat).